A 444-amino-acid chain; its full sequence is Serine/threonine-protein kinase 2 (444 aa).

The region spanning Asn-87–Gln-444 is the Protein kinase domain. Residues Leu-93–Ile-101 and Lys-118 each bind ATP. Asp-307 acts as the Proton acceptor in catalysis.

Belongs to the protein kinase superfamily. Ser/Thr protein kinase family. Poxviruses subfamily. Post-translationally, phosphorylated in vivo. Autophosphorylated in vitro.

It localises to the host endoplasmic reticulum. Its subcellular location is the host endoplasmic reticulum-Golgi intermediate compartment. The catalysed reaction is L-seryl-[protein] + ATP = O-phospho-L-seryl-[protein] + ADP + H(+). It carries out the reaction L-threonyl-[protein] + ATP = O-phospho-L-threonyl-[protein] + ADP + H(+). Functionally, essential serine-protein kinase involved in the early stage of virion morphogenesis. This chain is Serine/threonine-protein kinase 2 (OPG054), found in Vertebrata (FPV).